A 427-amino-acid chain; its full sequence is Ribitol transporter (427 aa).

Over 1–7 (MSVNNKQ) the chain is Cytoplasmic. Residues 8–28 (WYGLPLNLIWGYVAIAVFMTG) traverse the membrane as a helical segment. Residues 29–51 (DGFELAFLSHYIKALGFTPAQAS) lie on the Extracellular side of the membrane. The chain crosses the membrane as a helical span at residues 52-72 (FAFTLYGLAAALSAWVSGVVA). At 73 to 79 (EIITPRK) the chain is on the cytoplasmic side. The chain crosses the membrane as a helical span at residues 80–100 (AMLIGFVLWCVFHVLFLVFGL). Topologically, residues 101–107 (GRANYAL) are extracellular. A helical transmembrane segment spans residues 108–128 (ILLFYGIRGLAYPLFLYSFIV). The Cytoplasmic portion of the chain corresponds to 129 to 141 (AIIHNVRSDSSSS). Residues 142 to 162 (ALGWFWAVYSVGIGVFGSYIP) traverse the membrane as a helical segment. Over 163–171 (SFTIPHIGE) the chain is Extracellular. Residues 172–192 (MGTLWLALLFCATGGIIALVS) form a helical membrane-spanning segment. Residues 193–238 (MRHTETPRHMQNLTTREKFAELGRAATLLYTNRSILFSSIVRIINT) are Cytoplasmic-facing. Residues 239–259 (LSLFGFAVIMPMMFVDELGFT) traverse the membrane as a helical segment. Residues 260–263 (TSEW) lie on the Extracellular side of the membrane. Residues 264–284 (LQVWAAFFFTTIFSNVFWGIV) traverse the membrane as a helical segment. The Cytoplasmic portion of the chain corresponds to 285–295 (AEKMGWMKVIR). The chain crosses the membrane as a helical span at residues 296–316 (WFGCIGMALSSLAFYYLPQHF). At 317–323 (GHNFAMA) the chain is on the extracellular side. Residues 324–344 (LVPAIALGIFVAAFVPMAAVF) form a helical membrane-spanning segment. At 345-360 (PALEPNHKGAAISVYN) the chain is on the cytoplasmic side. The helical transmembrane segment at 361 to 381 (LSAGLSNFLAPAIAVVLLPYF) threads the bilayer. At 382–383 (ST) the chain is on the extracellular side. A helical membrane pass occupies residues 384-404 (IGVVIAYTALYILAFFLCPLI). Residues 405-427 (RVEQPGFTSDQHAKPFTANAAES) lie on the Cytoplasmic side of the membrane.

This sequence belongs to the major facilitator superfamily. Sugar transporter (TC 2.A.1.1) family. CsbX subfamily.

The protein resides in the cell membrane. This Klebsiella pneumoniae protein is Ribitol transporter (rbtT).